The sequence spans 87 residues: MANIKSQIKRIGTNKKAQERNKAVKSELKTAIRSVKTAITAGDKDAAVKAVSLAGKKLDKAASKGVIHKNQAANRKGAIAKQVAKIG.

Positions 1–22 (MANIKSQIKRIGTNKKAQERNK) are disordered.

This sequence belongs to the bacterial ribosomal protein bS20 family.

Binds directly to 16S ribosomal RNA. The sequence is that of Small ribosomal subunit protein bS20 from Clavibacter michiganensis subsp. michiganensis (strain NCPPB 382).